A 182-amino-acid polypeptide reads, in one-letter code: MRVLGIDPGLTRCGIGVVDGAVGAPLTMVAAGAVRTLADEELPARLLGIEKGIEQWLDDYQPDAVAVERVFAQHNVRTVMGTAQASAIAVVCAARRGLPVSLHTPSEVKAAITGSGRADKAQVGTMVARILRLDSPPRPADAADAVALAICYLWRGSAQERIARARQKFARTIELARQRHGL.

Residues aspartate 7, glutamate 68, and aspartate 141 contribute to the active site. 3 residues coordinate Mg(2+): aspartate 7, glutamate 68, and aspartate 141.

Belongs to the RuvC family. In terms of assembly, homodimer which binds Holliday junction (HJ) DNA. The HJ becomes 2-fold symmetrical on binding to RuvC with unstacked arms; it has a different conformation from HJ DNA in complex with RuvA. In the full resolvosome a probable DNA-RuvA(4)-RuvB(12)-RuvC(2) complex forms which resolves the HJ. Requires Mg(2+) as cofactor.

Its subcellular location is the cytoplasm. It catalyses the reaction Endonucleolytic cleavage at a junction such as a reciprocal single-stranded crossover between two homologous DNA duplexes (Holliday junction).. In terms of biological role, the RuvA-RuvB-RuvC complex processes Holliday junction (HJ) DNA during genetic recombination and DNA repair. Endonuclease that resolves HJ intermediates. Cleaves cruciform DNA by making single-stranded nicks across the HJ at symmetrical positions within the homologous arms, yielding a 5'-phosphate and a 3'-hydroxyl group; requires a central core of homology in the junction. The consensus cleavage sequence is 5'-(A/T)TT(C/G)-3'. Cleavage occurs on the 3'-side of the TT dinucleotide at the point of strand exchange. HJ branch migration catalyzed by RuvA-RuvB allows RuvC to scan DNA until it finds its consensus sequence, where it cleaves and resolves the cruciform DNA. This Thermobifida fusca (strain YX) protein is Crossover junction endodeoxyribonuclease RuvC.